The sequence spans 113 residues: Ferredoxin-1 (113 aa).

4Fe-4S ferredoxin-type domains lie at 2–30 and 31–60; these read TYIV…YEGE and NFLV…PDTE. Cys9 and Cys17 together coordinate [3Fe-4S] cluster. [4Fe-4S] cluster-binding residues include Cys21, Cys40, Cys43, and Cys46. Cys50 lines the [3Fe-4S] cluster pocket.

[4Fe-4S] cluster serves as cofactor. It depends on [3Fe-4S] cluster as a cofactor.

The sequence is that of Ferredoxin-1 (fdxA) from Caulobacter vibrioides (strain ATCC 19089 / CIP 103742 / CB 15) (Caulobacter crescentus).